The sequence spans 428 residues: Enolase (428 aa).

Gln-163 contacts (2R)-2-phosphoglycerate. Glu-205 (proton donor) is an active-site residue. Positions 242, 285, and 312 each coordinate Mg(2+). Lys-337, Arg-366, Ser-367, and Lys-388 together coordinate (2R)-2-phosphoglycerate. The Proton acceptor role is filled by Lys-337.

It belongs to the enolase family. Mg(2+) serves as cofactor.

Its subcellular location is the cytoplasm. It is found in the secreted. It localises to the cell surface. The enzyme catalyses (2R)-2-phosphoglycerate = phosphoenolpyruvate + H2O. The protein operates within carbohydrate degradation; glycolysis; pyruvate from D-glyceraldehyde 3-phosphate: step 4/5. Functionally, catalyzes the reversible conversion of 2-phosphoglycerate (2-PG) into phosphoenolpyruvate (PEP). It is essential for the degradation of carbohydrates via glycolysis. The sequence is that of Enolase from Persephonella marina (strain DSM 14350 / EX-H1).